The sequence spans 367 residues: UDP-N-acetylenolpyruvoylglucosamine reductase 2 (367 aa).

The 168-residue stretch at 31-198 (IGGKPRSAVR…LAIELQLLTD (168 aa)) folds into the FAD-binding PCMH-type domain. Arg176 is an active-site residue. The Proton donor role is filled by Ser256. Residue Glu357 is part of the active site.

It belongs to the MurB family. FAD serves as cofactor.

Its subcellular location is the cytoplasm. It carries out the reaction UDP-N-acetyl-alpha-D-muramate + NADP(+) = UDP-N-acetyl-3-O-(1-carboxyvinyl)-alpha-D-glucosamine + NADPH + H(+). Its pathway is cell wall biogenesis; peptidoglycan biosynthesis. Functionally, cell wall formation. This Corynebacterium glutamicum (strain ATCC 13032 / DSM 20300 / JCM 1318 / BCRC 11384 / CCUG 27702 / LMG 3730 / NBRC 12168 / NCIMB 10025 / NRRL B-2784 / 534) protein is UDP-N-acetylenolpyruvoylglucosamine reductase 2 (murB2).